A 67-amino-acid chain; its full sequence is UPF0435 protein SSP0913 (67 aa).

This sequence belongs to the UPF0435 family.

The protein is UPF0435 protein SSP0913 of Staphylococcus saprophyticus subsp. saprophyticus (strain ATCC 15305 / DSM 20229 / NCIMB 8711 / NCTC 7292 / S-41).